We begin with the raw amino-acid sequence, 331 residues long: UPF0324 membrane protein SAR0338 (331 aa).

Transmembrane regions (helical) follow at residues 9-26 (FMIG…SFLA), 31-48 (ILDK…AILY), 69-88 (LLRF…DIIG), 93-115 (LLAI…NKLL), 122-144 (ALLL…APIF), 154-176 (SIGI…YAIF), 183-202 (YGAW…LAGG), 217-234 (LGRV…ILIM), 247-269 (ISIP…VTIP), 273-295 (LNIL…GLNV), and 308-330 (LMTI…HWLY).

Belongs to the UPF0324 family.

The protein localises to the cell membrane. The sequence is that of UPF0324 membrane protein SAR0338 from Staphylococcus aureus (strain MRSA252).